Here is a 211-residue protein sequence, read N- to C-terminus: DELTA-stichotoxin-Hmg2a (211 aa).

The signal sequence occupies residues 1–19 (MNRLIVLFLIVTMICATIA). A propeptide spanning residues 20-34 (VPSREELEDQKEYKR) is cleaved from the precursor. The segment at 37–46 (ALAGTIIEGA) is plays an important role in the hemolytic activity. The segment at 45 to 64 (GASLGFQILDKVLGELGKVS) is N-terminal region. 7 residues coordinate phosphocholine: Ser-88, Val-121, Ser-139, Pro-141, Tyr-167, Tyr-171, and Tyr-172. Residues 139 to 154 (SVPFDYNFYSNWWDVK) are trp-rich region, which is important for the binding to lipid membrane. The short motif at 177-179 (RGD) is the Cell attachment site, crucial for protein stability element.

The protein belongs to the actinoporin family. Sea anemone subfamily. In terms of assembly, octamer or nonamer in membranes. Monomer in the soluble state.

The protein localises to the secreted. It is found in the nematocyst. Its subcellular location is the target cell membrane. Its function is as follows. Pore-forming protein that forms cations-selective hydrophilic pores of around 1 nm and causes cardiac stimulation and cytolysis. Pore formation is a multi-step process that involves specific recognition of membrane sphingomyelin (but neither cholesterol nor phosphatidylcholine) using aromatic rich region and adjacent phosphocholine (POC) binding site, firm binding to the membrane (mainly driven by hydrophobic interactions) accompanied by the transfer of the N-terminal region to the lipid-water interface and finally pore formation after oligomerization of monomers. In Heteractis magnifica (Magnificent sea anemone), this protein is DELTA-stichotoxin-Hmg2a.